Reading from the N-terminus, the 471-residue chain is Heat shock 70 kDa protein 13 (471 aa).

Positions 1 to 22 are cleaved as a signal peptide; the sequence is MAGEMTILGSAVLTLLLAGYLA. N-linked (GlcNAc...) asparagine glycosylation is present at asparagine 184. Residues 316–339 are disordered; that stretch reads NDSQKPQNADSKLPEDQLTPGDGH.

The protein belongs to the heat shock protein 70 family. In terms of assembly, binds UBQLN2.

It localises to the microsome. Its subcellular location is the endoplasmic reticulum. Has peptide-independent ATPase activity. In Rattus norvegicus (Rat), this protein is Heat shock 70 kDa protein 13 (Hspa13).